Here is a 265-residue protein sequence, read N- to C-terminus: UPF0354 protein ABC2771 (265 aa).

Belongs to the UPF0354 family.

The sequence is that of UPF0354 protein ABC2771 from Shouchella clausii (strain KSM-K16) (Alkalihalobacillus clausii).